The following is a 414-amino-acid chain: Na(+)/H(+) antiporter NhaA (414 aa).

The next 11 helical transmembrane spans lie at Val22–Phe42, Leu61–Val81, Met101–Phe121, Gly131–Gly151, Leu171–Ile191, Ser215–Val235, Gly239–Ala259, Val281–Val301, Leu308–Val328, Trp343–Ile363, and Lys379–Val399.

Belongs to the NhaA Na(+)/H(+) (TC 2.A.33) antiporter family.

The protein localises to the cell membrane. It catalyses the reaction Na(+)(in) + 2 H(+)(out) = Na(+)(out) + 2 H(+)(in). Functionally, na(+)/H(+) antiporter that extrudes sodium in exchange for external protons. The protein is Na(+)/H(+) antiporter NhaA of Thermobifida fusca (strain YX).